The chain runs to 93 residues: Large ribosomal subunit protein uL23cz/uL23cy (93 aa).

Belongs to the universal ribosomal protein uL23 family. In terms of assembly, part of the 50S ribosomal subunit.

The protein resides in the plastid. The protein localises to the chloroplast. Functionally, binds to 23S rRNA. The sequence is that of Large ribosomal subunit protein uL23cz/uL23cy (rpl23-A) from Eucalyptus globulus subsp. globulus (Tasmanian blue gum).